Reading from the N-terminus, the 409-residue chain is ATPase ASNA1 homolog (409 aa).

21–28 (KGGVGKTT) is an ATP binding site. The active site involves D62. ATP-binding residues include E303 and N330. Zn(2+) contacts are provided by C342 and C345.

Belongs to the arsA ATPase family. As to quaternary structure, homodimer.

It is found in the cytoplasm. It localises to the endoplasmic reticulum. ATPase required for the post-translational delivery of tail-anchored (TA) proteins to the endoplasmic reticulum. Recognizes and selectively binds the transmembrane domain of TA proteins in the cytosol. This complex then targets to the endoplasmic reticulum by membrane-bound receptors, where the tail-anchored protein is released for insertion. This process is regulated by ATP binding and hydrolysis. ATP binding drives the homodimer towards the closed dimer state, facilitating recognition of newly synthesized TA membrane proteins. ATP hydrolysis is required for insertion. Subsequently, the homodimer reverts towards the open dimer state, lowering its affinity for the membrane-bound receptor, and returning it to the cytosol to initiate a new round of targeting. The protein is ATPase ASNA1 homolog of Leishmania infantum.